Consider the following 352-residue polypeptide: UPF0324 membrane protein BCE_5279 (352 aa).

10 helical membrane passes run 25–47 (FGFSQGIGITLLIAIVAKYLAEL), 52–71 (IMGQLVIAILIGMVWRAAIG), 111–130 (VLVIAAVVITFTIFVVYGLT), 140–162 (GILTACGTAICGAAAVVAIAPQV), 169–191 (TAVGAAIIAILGTIFTLIYTLLY), 201–223 (YGVFSGATLHEIAHVIAAAAPGG), 230–252 (AVIVKLTRVAMLVPVAILIGLWF), 267–289 (LPIPWFIFGFLAMSAVHSLGIIP), 291–313 (VVAGYIVVIAYMLIAMAMAGLGL), and 328–350 (FVAGLIGSVCLSVLGYVLVYALG).

This sequence belongs to the UPF0324 family.

The protein localises to the cell membrane. This chain is UPF0324 membrane protein BCE_5279, found in Bacillus cereus (strain ATCC 10987 / NRS 248).